Reading from the N-terminus, the 143-residue chain is Small ribosomal subunit protein uS9 (143 aa).

The tract at residues 124–143 (PEPKKFGGKGARARFQKSYR) is disordered. The segment covering 134-143 (ARARFQKSYR) has biased composition (basic residues).

The protein belongs to the universal ribosomal protein uS9 family.

The chain is Small ribosomal subunit protein uS9 (RPS16) from Candida glabrata (strain ATCC 2001 / BCRC 20586 / JCM 3761 / NBRC 0622 / NRRL Y-65 / CBS 138) (Yeast).